Consider the following 826-residue polypeptide: Ferric-pyoverdine M114 receptor PbuA (826 aa).

The first 44 residues, 1–44 (MSASRFMLRPLTRALLMHGATRTRLAGTGLGLALTLTAAPYVQA), serve as a signal peptide directing secretion. The short motif at 110 to 119 (DGNTVTVLGP) is the TonB box element. The 112-residue stretch at 160-271 (SLKETPQSVT…TAGGVNFVRK (112 aa)) folds into the TBDR plug domain. The TBDR beta-barrel domain occupies 276–826 (TAHTQLSLSA…NFVMSVKADF (551 aa)). The TonB C-terminal box signature appears at 809–826 (GNFYGDPRNFVMSVKADF).

The protein belongs to the TonB-dependent receptor family.

The protein localises to the cell outer membrane. Its function is as follows. Specific receptor for the siderophore ferric pyoverdine (pseudobactin) M114. The chain is Ferric-pyoverdine M114 receptor PbuA (pbuA) from Pseudomonas sp. (strain M114).